The sequence spans 305 residues: N-acyl-aromatic-L-amino acid amidohydrolase (carboxylate-forming) (305 aa).

2 residues coordinate Zn(2+): histidine 15 and glutamate 18. Substrate contacts are provided by residues arginine 57 and 64–65; that span reads NR. Histidine 108 contacts Zn(2+). Substrate contacts are provided by glutamate 171 and tyrosine 281.

Belongs to the AspA/AstE family. Aspartoacylase subfamily. Homotetramer. Requires Zn(2+) as cofactor.

It is found in the apical cell membrane. Its subcellular location is the cytoplasm. It catalyses the reaction an N-acyl-aromatic L-alpha-amino acid + H2O = an aromatic L-alpha-amino acid + a carboxylate. The catalysed reaction is an N-acetyl-L-cysteine-S-conjugate + H2O = an S-substituted L-cysteine + acetate. Functionally, plays an important role in deacetylating mercapturic acids in kidney proximal tubules. In Xenopus laevis (African clawed frog), this protein is N-acyl-aromatic-L-amino acid amidohydrolase (carboxylate-forming) (acy3).